A 606-amino-acid polypeptide reads, in one-letter code: Mitogen-activated protein kinase kinase kinase 7 (606 aa).

Residues 1–300 (MSTASAASSS…FPGADEPLQY (300 aa)) form an interaction with MAPK8IP1 region. The Protein kinase domain occupies 36–291 (IEVEEVVGRG…KIMTHLMRYF (256 aa)). ATP-binding positions include 42-50 (VGRGAFGVV) and Lys63. Lys72 participates in a covalent cross-link: Glycyl lysine isopeptide (Lys-Gly) (interchain with G-Cter in ubiquitin). Asp156 functions as the Proton acceptor in the catalytic mechanism. Lys158 is covalently cross-linked (Glycyl lysine isopeptide (Lys-Gly) (interchain with G-Cter in ubiquitin)). 2 positions are modified to (Microbial infection) O-acetylthreonine; by Yersinia YopJ; alternate: Thr184 and Thr187. A phosphothreonine; by autocatalysis; alternate mark is found at Thr184 and Thr187. The residue at position 192 (Ser192) is a Phosphoserine; by autocatalysis. Lys209 is covalently cross-linked (Glycyl lysine isopeptide (Lys-Gly) (interchain with G-Cter in ubiquitin)). Positions 301–338 (PCQYSDEGQSNSATSTGSFMDIASTNTSNKSDTNMEQV) are disordered. Positions 306–338 (DEGQSNSATSTGSFMDIASTNTSNKSDTNMEQV) are enriched in polar residues. The residue at position 341 (Thr341) is a (Microbial infection) O-acetylthreonine; by Yersinia YopJ; alternate. A disordered region spans residues 354–391 (KNQAKQQSESGRLSLGASRGSSVESLPPTSEGKRMSAD). The span at 361–375 (SESGRLSLGASRGSS) shows a compositional bias: low complexity. Residues Ser367, Ser389, and Ser439 each carry the phosphoserine modification. The span at 443 to 452 (LTVTGTEPGQ) shows a compositional bias: polar residues. Residues 443-493 (LTVTGTEPGQVSSRSSSPSVRMITTSGPTSEKPTRSHPWTPDDSTDTNGSD) are disordered. (Microbial infection) O-acetylthreonine; by Yersinia YopJ; alternate is present on residues Thr444, Thr446, and Thr448. The segment covering 453–463 (VSSRSSSPSVR) has biased composition (low complexity). Ser455 carries the phosphoserine modification. Positions 464 to 473 (MITTSGPTSE) are enriched in polar residues. At Thr467 the chain carries (Microbial infection) O-acetylthreonine; by Yersinia YopJ; alternate.

The protein belongs to the protein kinase superfamily. STE Ser/Thr protein kinase family. MAP kinase kinase kinase subfamily. Can form homodimer. Binds both upstream activators and downstream substrates in multimolecular complexes. Interacts with TAB1/MAP3K7IP1, TAB2/MAP3K7IP2 and TAB3/MAP3K7IP3. Identified in the TRIKA2 complex composed of MAP3K7/TAK1, TAB1/MAP3K7IP1 and TAB2/MAP3K7IP2. Interacts with PPM1L and PPM1B/PP2CB. Interaction with PP2A and PPP6C leads to its repressed activity. Interacts with TRAF6 and TAB1/MAP3K7IP1; during IL-1 signaling. Interacts with TAOK1 and TAOK2; interaction with TAOK2 interferes with MAP3K7 interaction with IKKA, thus preventing NF-kappa-B activation. Interacts with DYNC2I2 (via WD domains). Interacts with CYLD and RBCK1. Interacts with TGFBR1; induces MAP3K7/TAK1 activation by TRAF6. Interacts with MAPK8IP1 and SMAD6. Interacts with isoform 1 of VRK2. Interacts with DAB2; the interaction is induced by TGF-beta stimulation and may mediate TGF-beta stimulated JNK activation. Interacts with TRIM5. Part of a complex containing ITCH, NDFIP1 and MAP3K7. Interacts with IFIT5; the interaction synergizes the recruitment of IKK to MAP3K7 and enhances IKK phosphorylation. Interacts with PLEKHM1 (via N- and C-terminus). Interacts with TRIM8. Found in a complex with SH3RF1, RAC2, MAP2K7/MKK7, MAPK8IP1/JIP1, MAPK8/JNK1 and MAPK9/JNK2. Interacts with SASH1. Interacts with RIPK1. In terms of assembly, (Microbial infection) Interacts with herpes simplex virus 2 protein US2; this interaction induces MAP3K7 phosphorylation and subsequent activation. Mg(2+) is required as a cofactor. Association with TAB1/MAP3K7IP1 promotes autophosphorylation at Ser-192 and subsequent activation. Association with TAB2/MAP3K7IP2, itself associated with free unanchored Lys-63 polyubiquitin chain, promotes autophosphorylation and subsequent activation of MAP3K7. Dephosphorylation at Ser-192 by PPM1B/PP2CB and at Thr-187 by PP2A and PPP6C leads to inactivation. In terms of processing, 'Lys-48'-linked polyubiquitination at Lys-72 is induced by TNFalpha, and leads to proteasomal degradation. Undergoes 'Lys-48'-linked polyubiquitination catalyzed by ITCH. Requires 'Lys-63'-linked polyubiquitination for autophosphorylation and subsequent activation. 'Lys-63'-linked ubiquitination does not lead to proteasomal degradation. Deubiquitinated by CYLD, a protease that selectively cleaves 'Lys-63'-linked ubiquitin chains. Deubiquitinated by Y.enterocolitica YopP. Deubiquitinated by USP19; leading to negative regulation of TNF-alpha- and IL-1beta-triggered NF-kappa-B activation. Post-translationally, (Microbial infection) Cleaved and inactivated by the proteases 3C of coxsackievirus A16 and human enterovirus D68, allowing the virus to disrupt TRAF6-triggered NF-kappa-B induction. (Microbial infection) Acetylation of Thr-184 and Thr-187 by Yersinia YopJ prevents phosphorylation and activation, thus blocking the MAPK signaling pathway. Isoform 1A is the most abundant in ovary, skeletal muscle, spleen and blood mononuclear cells. Isoform 1B is highly expressed in brain, kidney and small intestine. Isoform 1C is the major form in prostate. Isoform 1D is the less abundant form.

It localises to the cytoplasm. The protein resides in the cell membrane. It carries out the reaction L-seryl-[protein] + ATP = O-phospho-L-seryl-[protein] + ADP + H(+). The enzyme catalyses L-threonyl-[protein] + ATP = O-phospho-L-threonyl-[protein] + ADP + H(+). Activated by pro-inflammatory cytokines and in response to physical and chemical stresses, including osmotic stress, oxidative stress, arsenic and ultraviolet light irradiation. Activated by 'Lys-63'-linked polyubiquitination and by autophosphorylation. Association with TAB1/MAP3K7IP1 and TAB2/MAP3K7IP2 promotes activation through autophosphorylation, whereas PPM1B/PP2CB, PP2A and PPP6C dephosphorylation leads to inactivation. Ceramides are also able to activate MAP3K7/TAK1. In terms of biological role, serine/threonine kinase which acts as an essential component of the MAP kinase signal transduction pathway. Plays an important role in the cascades of cellular responses evoked by changes in the environment. Mediates signal transduction of TRAF6, various cytokines including interleukin-1 (IL-1), transforming growth factor-beta (TGFB), TGFB-related factors like BMP2 and BMP4, toll-like receptors (TLR), tumor necrosis factor receptor CD40 and B-cell receptor (BCR). Once activated, acts as an upstream activator of the MKK/JNK signal transduction cascade and the p38 MAPK signal transduction cascade through the phosphorylation and activation of several MAP kinase kinases like MAP2K1/MEK1, MAP2K3/MKK3, MAP2K6/MKK6 and MAP2K7/MKK7. These MAP2Ks in turn activate p38 MAPKs and c-jun N-terminal kinases (JNKs); both p38 MAPK and JNK pathways control the transcription factors activator protein-1 (AP-1). Independently of MAP2Ks and p38 MAPKs, acts as a key activator of NF-kappa-B by promoting activation of the I-kappa-B-kinase (IKK) core complex. Mechanistically, recruited to polyubiquitin chains of RIPK2 and IKBKG/NEMO via TAB2/MAP3K7IP2 and TAB3/MAP3K7IP3, and catalyzes phosphorylation and activation of IKBKB/IKKB component of the IKK complex, leading to NF-kappa-B activation. In osmotic stress signaling, plays a major role in the activation of MAPK8/JNK1, but not that of NF-kappa-B. Promotes TRIM5 capsid-specific restriction activity. Phosphorylates RIPK1 at 'Ser-321' which positively regulates RIPK1 interaction with RIPK3 to promote necroptosis but negatively regulates RIPK1 kinase activity and its interaction with FADD to mediate apoptosis. Phosphorylates STING1 in response to cGAMP-activation, promoting association between STEEP1 and STING1 and STING1 translocation to COPII vesicles. The polypeptide is Mitogen-activated protein kinase kinase kinase 7 (Homo sapiens (Human)).